A 125-amino-acid polypeptide reads, in one-letter code: Protein Bouncer (125 aa).

The first 18 residues, methionine 1–proline 18, serve as a signal peptide directing secretion. 5 disulfides stabilise this stretch: cysteine 23/cysteine 48, cysteine 26/cysteine 35, cysteine 42/cysteine 66, cysteine 72/cysteine 91, and cysteine 92/cysteine 97. One can recognise a UPAR/Ly6 domain in the interval cysteine 23–asparagine 98. Asparagine 32 carries an N-linked (GlcNAc...) asparagine glycan. A glycan (N-linked (GlcNAc...) asparagine) is linked at asparagine 84. The GPI-anchor amidated asparagine moiety is linked to residue asparagine 98. The propeptide at serine 99 to leucine 125 is removed in mature form.

It belongs to the SPACA4/bouncer family. In terms of assembly, interacts with spermatocyte complex composed of izumo1, spaca6 and tmem81. Post-translationally, N-glycosylated. Highly expressed in oocytes. Not expressed in testis.

It localises to the cell membrane. Oocyte-expressed fertilization factor that mediates sperm-egg binding and is essential for sperm entry into the egg. Necessary and sufficient to mediate species-specific gamete recognition and fertilization, which is essential for vertebrate species performing external fertilization. External fertilization cannot guarantee that only conspecific sperm reaches the egg by precopulatory mate choice: proteins such as Bouncer can therefore support the selection of conspecific sperm. The polypeptide is Protein Bouncer (Danio rerio (Zebrafish)).